The following is a 666-amino-acid chain: Probable potassium transport system protein Kup (666 aa).

A run of 12 helical transmembrane segments spans residues 16–36 (GFIIALGIVYGDIGTSPLYTM), 58–78 (ISLIIWTLTLITTIKYVLIAL), 100–120 (PWLIIPAMIGGATLLSDGALT), 141–161 (IYQNQTNIIITTLVILIVLFG), 165–185 (FGTGFIGKIFGPVMFIWFSFL), 221–241 (IFILGSIFLATTGAEALYSDL), 253–273 (WPFVKMCIVWSYCGQAAWILA), 294–314 (VYLVSLATLAAIIASQALISG), 343–363 (LYIPVINWILFAVTSCTVLAF), 373–393 (YGLAITITMLMTTILLKYYLI), 399–419 (PILAHLAMAFFALVEFIFFLA), and 424–444 (FMHGGYAVVILALAIVFVMFI).

The protein belongs to the HAK/KUP transporter (TC 2.A.72) family.

It is found in the cell membrane. The catalysed reaction is K(+)(in) + H(+)(in) = K(+)(out) + H(+)(out). Transport of potassium into the cell. Likely operates as a K(+):H(+) symporter. This Streptococcus pyogenes serotype M4 (strain MGAS10750) protein is Probable potassium transport system protein Kup.